The sequence spans 373 residues: Homoserine O-acetyltransferase (373 aa).

One can recognise an AB hydrolase-1 domain in the interval 46–355; sequence NAILICHPLT…NPNGHDSFLL (310 aa). The active-site Nucleophile is the Ser151. A substrate-binding site is contributed by Arg221. Active-site residues include Asp317 and His350. Asp351 contributes to the substrate binding site.

It belongs to the AB hydrolase superfamily. MetX family. In terms of assembly, homodimer.

Its subcellular location is the cytoplasm. It carries out the reaction L-homoserine + acetyl-CoA = O-acetyl-L-homoserine + CoA. It participates in amino-acid biosynthesis; L-methionine biosynthesis via de novo pathway; O-acetyl-L-homoserine from L-homoserine: step 1/1. Transfers an acetyl group from acetyl-CoA to L-homoserine, forming acetyl-L-homoserine. The sequence is that of Homoserine O-acetyltransferase from Zymomonas mobilis subsp. mobilis (strain ATCC 31821 / ZM4 / CP4).